The sequence spans 201 residues: Protamine-like protein 99C (201 aa).

Residues 93–143 (GGQQSSCQRQSPSARLRESERRSSRSKTLCRSAKNRQRGKPKPQQSKRRLS) are disordered. Polar residues predominate over residues 94–104 (GQQSSCQRQSP). Residues 125 to 143 (AKNRQRGKPKPQQSKRRLS) show a composition bias toward basic residues.

Belongs to the UPF0771 family.

It is found in the nucleus. Its subcellular location is the chromosome. Regulates chromatin compaction in spermatid nuclei and is essential for male fertility. Functions in parallel with other chromatin-condensing proteins such as ProtA, ProtB and Mst77F. In Drosophila melanogaster (Fruit fly), this protein is Protamine-like protein 99C.